The chain runs to 853 residues: DNA mismatch repair protein MutS (853 aa).

An ATP-binding site is contributed by 614–621 (GPNMGGKS).

Belongs to the DNA mismatch repair MutS family.

In terms of biological role, this protein is involved in the repair of mismatches in DNA. It is possible that it carries out the mismatch recognition step. This protein has a weak ATPase activity. The sequence is that of DNA mismatch repair protein MutS from Shigella dysenteriae serotype 1 (strain Sd197).